The sequence spans 53 residues: Reg12l (53 aa).

A propeptide spanning residues 1–34 (RVLFRSGDQPADQPAERMQDISPEQNPLFHPDKR) is cleaved from the precursor. 3 disulfides stabilise this stretch: C36/C50, C37/C48, and C42/C51.

Belongs to the conotoxin M superfamily. In terms of tissue distribution, expressed by the venom duct.

It is found in the secreted. The sequence is that of Reg12l from Conus regius (Crown cone).